Here is a 497-residue protein sequence, read N- to C-terminus: 3-octaprenyl-4-hydroxybenzoate carboxy-lyase (497 aa).

Position 175 (Asn-175) interacts with Mn(2+). Residues 178–180 (IYR), 192–194 (RWL), and 197–198 (RG) contribute to the prenylated FMN site. Glu-241 is a Mn(2+) binding site. The active-site Proton donor is Asp-290.

This sequence belongs to the UbiD family. In terms of assembly, homohexamer. The cofactor is prenylated FMN. Requires Mn(2+) as cofactor.

The protein resides in the cell membrane. The enzyme catalyses a 4-hydroxy-3-(all-trans-polyprenyl)benzoate + H(+) = a 2-(all-trans-polyprenyl)phenol + CO2. It participates in cofactor biosynthesis; ubiquinone biosynthesis. Catalyzes the decarboxylation of 3-octaprenyl-4-hydroxy benzoate to 2-octaprenylphenol, an intermediate step in ubiquinone biosynthesis. The protein is 3-octaprenyl-4-hydroxybenzoate carboxy-lyase of Shigella dysenteriae serotype 1 (strain Sd197).